The following is a 1324-amino-acid chain: Probable phosphoribosylformylglycinamidine synthase (1324 aa).

ATP is bound by residues 314-325 (GATTGTGGRIRD), 394-396 (SGF), and alanine 681. Residues aspartate 682, glutamate 721, asparagine 725, and aspartate 894 each coordinate Mg(2+). ATP is bound at residue serine 896. One can recognise a Glutamine amidotransferase type-1 domain in the interval 1053–1295 (RVAIIREEGS…LTWQWAESSE (243 aa)). The active-site Nucleophile is the cysteine 1146. Residues histidine 1280 and aspartate 1282 contribute to the active site.

In the N-terminal section; belongs to the FGAMS family.

The protein localises to the cytoplasm. The catalysed reaction is N(2)-formyl-N(1)-(5-phospho-beta-D-ribosyl)glycinamide + L-glutamine + ATP + H2O = 2-formamido-N(1)-(5-O-phospho-beta-D-ribosyl)acetamidine + L-glutamate + ADP + phosphate + H(+). It participates in purine metabolism; IMP biosynthesis via de novo pathway; 5-amino-1-(5-phospho-D-ribosyl)imidazole from N(2)-formyl-N(1)-(5-phospho-D-ribosyl)glycinamide: step 1/2. Functionally, phosphoribosylformylglycinamidine synthase involved in the purines biosynthetic pathway. Catalyzes the ATP-dependent conversion of formylglycinamide ribonucleotide (FGAR) and glutamine to yield formylglycinamidine ribonucleotide (FGAM) and glutamate. This Caenorhabditis elegans protein is Probable phosphoribosylformylglycinamidine synthase.